A 597-amino-acid polypeptide reads, in one-letter code: Formate--tetrahydrofolate ligase (597 aa).

84–91 (TPLGEGKS) contacts ATP.

The protein belongs to the formate--tetrahydrofolate ligase family.

It catalyses the reaction (6S)-5,6,7,8-tetrahydrofolate + formate + ATP = (6R)-10-formyltetrahydrofolate + ADP + phosphate. It participates in one-carbon metabolism; tetrahydrofolate interconversion. This chain is Formate--tetrahydrofolate ligase, found in Dehalococcoides mccartyi (strain ATCC BAA-2266 / KCTC 15142 / 195) (Dehalococcoides ethenogenes (strain 195)).